We begin with the raw amino-acid sequence, 386 residues long: Homogentisate solanesyltransferase, chloroplastic (386 aa).

A chloroplast-targeting transit peptide spans M1–R69. Helical transmembrane passes span V130–I150, L181–I201, L204–L220, F225–V245, W259–I279, I306–F326, S335–L355, and I365–F385.

It belongs to the UbiA prenyltransferase family.

It is found in the plastid. The protein localises to the chloroplast membrane. It catalyses the reaction all-trans-nonaprenyl diphosphate + homogentisate + H(+) = 2-methyl-6-(all-trans-nonaprenyl)benzene-1,4-diol + CO2 + diphosphate. Inhibited by haloxydine (3,5-dichloro-2,6-difluoro-4-haloxypyridine). In terms of biological role, involved in the synthesis of plastoquinone-9. Can use both homogentisic acid and 2,5-dihydroxyphenylacetic acid gamma-lactone as prenyl acceptors, and solanesyl diphosphate &gt; farnesyl diphosphate &gt; geranylgeranyl diphosphate &gt;&gt; phytyl diphosphate as prenyl donors. Do not catalyze the decardoxylation of homogentisate uncoupled from prenylation. The sequence is that of Homogentisate solanesyltransferase, chloroplastic (HST) from Arabidopsis thaliana (Mouse-ear cress).